Here is a 567-residue protein sequence, read N- to C-terminus: Potassium-transporting ATPase potassium-binding subunit (567 aa).

A run of 11 helical transmembrane segments spans residues 5-25 (GWIQ…PLGG), 64-84 (TTYA…LYML), 136-156 (GLTV…IALI), 179-199 (LYVL…LGVP), 254-274 (ISNM…TNVF), 285-305 (WAIF…CYWA), 332-352 (IAMS…AVIA), 359-376 (ALGG…EIII), 421-441 (MLAV…ASVI), 486-506 (ITIG…AMAI), and 529-549 (LFVG…FFPA).

Belongs to the KdpA family. As to quaternary structure, the system is composed of three essential subunits: KdpA, KdpB and KdpC.

The protein resides in the cell inner membrane. Functionally, part of the high-affinity ATP-driven potassium transport (or Kdp) system, which catalyzes the hydrolysis of ATP coupled with the electrogenic transport of potassium into the cytoplasm. This subunit binds the periplasmic potassium ions and delivers the ions to the membrane domain of KdpB through an intramembrane tunnel. The protein is Potassium-transporting ATPase potassium-binding subunit of Brucella anthropi (strain ATCC 49188 / DSM 6882 / CCUG 24695 / JCM 21032 / LMG 3331 / NBRC 15819 / NCTC 12168 / Alc 37) (Ochrobactrum anthropi).